Here is a 407-residue protein sequence, read N- to C-terminus: WEB family protein At3g51720 (407 aa).

3 coiled-coil regions span residues 72–99 (KVLK…DKEN), 128–217 (SVGL…ARAA), and 247–278 (EEIL…EAEE).

It belongs to the WEB family.

The polypeptide is WEB family protein At3g51720 (Arabidopsis thaliana (Mouse-ear cress)).